We begin with the raw amino-acid sequence, 335 residues long: MRPILLQGHERALTQIRYNKDGDIIFSTAKDQHICAWYAHNGERLGTYHGHQGAIWTVDVDPTTTIIASGAADNTVRLWDVKTGKCLKTWDFNTAVKRVEFNEDATQLLAVTEQRMGFLGTIVVLDINLDVNGPQSDDRALTITCAESKATVAGWSYMSKYIIAGHEDGSVSQYDSKTGELLFNTQVHEPDLQVTDLQWSPDRTYFITASKDKTAKLVNARDLEVMKTYVTDTPLNSASITPKKDFVILGGGQAAMDVTTTSARQGKFEARFYHKIFEEEIGRVRGHFGPLNTVAVDPNGKGYASGGEDGYVRVHQFDKGYFDFTYEVERQVRQQ.

WD repeat units lie at residues 8 to 47, 50 to 91, 145 to 184, 189 to 228, and 286 to 325; these read GHER…RLGT, GHQG…KTWD, CAES…LLFN, EPDL…VMKT, and GHFG…FDFT.

It belongs to the eIF-3 subunit I family. In terms of assembly, component of the eukaryotic translation initiation factor 3 (eIF-3) complex.

It is found in the cytoplasm. Its function is as follows. Component of the eukaryotic translation initiation factor 3 (eIF-3) complex, which is involved in protein synthesis of a specialized repertoire of mRNAs and, together with other initiation factors, stimulates binding of mRNA and methionyl-tRNAi to the 40S ribosome. The eIF-3 complex specifically targets and initiates translation of a subset of mRNAs involved in cell proliferation. This is Eukaryotic translation initiation factor 3 subunit I (tif34) from Sclerotinia sclerotiorum (strain ATCC 18683 / 1980 / Ss-1) (White mold).